We begin with the raw amino-acid sequence, 297 residues long: uncharacterized protein (297 aa).

2 helical membrane passes run 17–37 (LALS…KEIF) and 48–68 (TISG…GYSI). Residues 17-196 (LALSGGGFYG…TLNYPITLFD (180 aa)) enclose the PNPLA domain. The short motif at 21 to 26 (GGGFYG) is the GXGXXG element. The GXSXG motif lies at 51 to 55 (GVSVG). S53 acts as the Nucleophile in catalysis. Residue N122 is glycosylated (N-linked (GlcNAc...) asparagine; by host). The active-site Proton acceptor is D183. Residues 183–185 (DGG) carry the DGA/G motif. N-linked (GlcNAc...) asparagine; by host glycosylation occurs at N239.

The protein localises to the membrane. Probable lipid hydrolase. This is an uncharacterized protein from Acanthamoeba polyphaga mimivirus (APMV).